Reading from the N-terminus, the 261-residue chain is Gap junction beta-6 protein (261 aa).

At 1-22 the chain is on the cytoplasmic side; sequence MDWGTLHTVIGGVNKHSTSIGK. Residues 23 to 45 form a helical membrane-spanning segment; the sequence is VWITVIFIFRVMILVVAAQEVWG. Residues 46–75 lie on the Extracellular side of the membrane; the sequence is DEQEDFVCNTLQPGCKNVCYDHFFPVSHIR. Residues 76–98 form a helical membrane-spanning segment; sequence LWALQLIFVSTPALLVAMHVAYY. Over 99–131 the chain is Cytoplasmic; that stretch reads RHETARKFIRGEKRNEFKDLEDIKRQKVRIEGS. Residues 132–154 traverse the membrane as a helical segment; it reads LWWTYTSSIFFRIIFEAAFMYVF. The Extracellular portion of the chain corresponds to 155-192; it reads YFLYNGYHLPWVLKCGIDPCPNLVDCFISRPTEKTVFT. The chain crosses the membrane as a helical span at residues 193–215; the sequence is VFMISASVICMLLNVAELCYLLL. Over 216–261 the chain is Cytoplasmic; sequence KLCFRRSKRTQAQRNHPNHALKESKQNEMNELISDSGQNAITSFPS.

The protein belongs to the connexin family. Beta-type (group I) subfamily. A connexon is composed of a hexamer of connexins. Interacts with CNST. Highly expressed in adult brain and skin. Less in uterus, lung and eye. Very low in testis and sciatic nerve. No expression before birth.

Its subcellular location is the cell membrane. It is found in the cell junction. The protein localises to the gap junction. Its function is as follows. One gap junction consists of a cluster of closely packed pairs of transmembrane channels, the connexons, through which materials of low MW diffuse from one cell to a neighboring cell. The sequence is that of Gap junction beta-6 protein (Gjb6) from Mus musculus (Mouse).